A 157-amino-acid polypeptide reads, in one-letter code: Phosphopantetheine adenylyltransferase (157 aa).

Substrate is bound at residue Thr-8. ATP contacts are provided by residues 8 to 9 (TF) and His-16. Substrate contacts are provided by Lys-40, Thr-72, and Arg-86. ATP-binding positions include 87–89 (GLR), Glu-97, and 122–128 (YSFLSSS).

It belongs to the bacterial CoaD family. In terms of assembly, homohexamer. Requires Mg(2+) as cofactor.

Its subcellular location is the cytoplasm. The enzyme catalyses (R)-4'-phosphopantetheine + ATP + H(+) = 3'-dephospho-CoA + diphosphate. It participates in cofactor biosynthesis; coenzyme A biosynthesis; CoA from (R)-pantothenate: step 4/5. In terms of biological role, reversibly transfers an adenylyl group from ATP to 4'-phosphopantetheine, yielding dephospho-CoA (dPCoA) and pyrophosphate. The polypeptide is Phosphopantetheine adenylyltransferase (Prochlorococcus marinus (strain MIT 9301)).